Consider the following 415-residue polypeptide: Multifunctional CCA protein (415 aa).

ATP contacts are provided by Gly8 and Arg11. Gly8 and Arg11 together coordinate CTP. 2 residues coordinate Mg(2+): Asp21 and Asp23. ATP is bound by residues Arg91, Arg137, and Arg140. CTP is bound by residues Arg91, Arg137, and Arg140. The region spanning 228-329 (TGIHTLMTLA…VGLFDSIDAW (102 aa)) is the HD domain.

The protein belongs to the tRNA nucleotidyltransferase/poly(A) polymerase family. Bacterial CCA-adding enzyme type 1 subfamily. In terms of assembly, monomer. Can also form homodimers and oligomers. Mg(2+) is required as a cofactor. Ni(2+) serves as cofactor.

It catalyses the reaction a tRNA precursor + 2 CTP + ATP = a tRNA with a 3' CCA end + 3 diphosphate. The catalysed reaction is a tRNA with a 3' CCA end + 2 CTP + ATP = a tRNA with a 3' CCACCA end + 3 diphosphate. In terms of biological role, catalyzes the addition and repair of the essential 3'-terminal CCA sequence in tRNAs without using a nucleic acid template. Adds these three nucleotides in the order of C, C, and A to the tRNA nucleotide-73, using CTP and ATP as substrates and producing inorganic pyrophosphate. tRNA 3'-terminal CCA addition is required both for tRNA processing and repair. Also involved in tRNA surveillance by mediating tandem CCA addition to generate a CCACCA at the 3' terminus of unstable tRNAs. While stable tRNAs receive only 3'-terminal CCA, unstable tRNAs are marked with CCACCA and rapidly degraded. The polypeptide is Multifunctional CCA protein (Cronobacter sakazakii (strain ATCC BAA-894) (Enterobacter sakazakii)).